Here is a 714-residue protein sequence, read N- to C-terminus: MGVTVIPRLLGLKDEKKIATTVGEARLSGINYRHPDSALVSYPVAAAAPLGRLPAGNYRIAIVGGGAGGIAALYELGRLAATLPAGSGIDVQIYEADPDSFLHDRPGIKAIKVRGLKAGRVSAALVHNGDPASGDTIYEVGAMRFPEIAGLTWHYASAAFGDAAPIKVFPNPGKVPTEFVFGNRVDRYVGSDPKDWEDPDSPTLKVLGVVAGGLVGNPQGENVAMYPIANVDPAKIAAILNAATPPADALERIQTKYWPEFIAQYDGLTLGAAVREIVTVAFEKGTLPPVDGVLDVDESISYYVELFGRFGFGTGGFKPLYNISLVEMMRLILWDYSNEYTLPVTENVEFIRNLFLKAQNVGAGKLVVQVRQERVANACHSGTASARAQLLSYDSHNAVHSEAYDFVILAVPHDQLTPIVSRSGFEHAASQNLGDAGLGLETHTYNQVYPPLLLSDSSPAANARIVTAIGQLHMARSSKVFATVKTAALDQPWVPQWRGEPIKAVVSDSGLAASYVVPSPIVEDGQAPEYSSLLASYTWEDDSTRLRHDFGLYPQNPATETGTADGMYRTMVNRAYRYVKYAGASNAQPWWFYQLLAEARTADRFVFDWTTNKTAGGFKLDMTGDHHQSNLCFRYHTHALAASLDNRFFIASDSYSHLGGWLEGAFMSALNAVAGLIVRANRGDVSALSTEARPLVIGLRPVVKVPAAELATSQ.

The propeptide at 1-15 (MGVTVIPRLLGLKDE) is removed in mature form; occupies the channel of the substrate amino acid from the outside of the protein to the interior flavin ring in the precursor. Residues Gly2, Gly68, and 95–96 (EA) each bind FAD. The propeptide at 108-109 (IK) is linker peptide. FAD-binding positions include Arg120, 141 to 144 (GAMR), and Val375. Residue Arg144 coordinates substrate. A substrate-binding site is contributed by Tyr537. FAD is bound by residues 652 to 653 (SD) and 660 to 662 (GWL). Gly660 contacts substrate.

Belongs to the phenylalanine 2-monooxygenase family. In terms of assembly, heterotetramer composed of 2 alpha and 2 beta subunits. It depends on FAD as a cofactor. In terms of processing, proteolytically cleaved to yield the active enzyme. Cleavage of the linkage between the 2 subunits causes reshaping of the oxygen channel and the hydrophobic environment around the flavin ring. Removal of the prosequence causes opening of the amino acid channel.

It carries out the reaction L-phenylalanine + O2 = 2-phenylacetamide + CO2 + H2O. Functionally, catalyzes both oxygenative decarboxylation and oxidative deamination, depending on the substrate used. Has high activity for L-Phe and L-Tyr, but relatively low activities for L-Met and L-Trp. L-Phe is mainly oxygenated and L-Met is mainly oxidized. This is Phenylalanine 2-monooxygenase precursor from Pseudomonas sp.